A 335-amino-acid chain; its full sequence is Lipoyl synthase (335 aa).

The [4Fe-4S] cluster site is built by cysteine 55, cysteine 60, cysteine 66, cysteine 81, cysteine 85, cysteine 88, and serine 292. The Radical SAM core domain occupies 67-281 (WEDREATFLI…SQRAEEIGFQ (215 aa)).

It belongs to the radical SAM superfamily. Lipoyl synthase family. Requires [4Fe-4S] cluster as cofactor.

The protein localises to the cytoplasm. The catalysed reaction is [[Fe-S] cluster scaffold protein carrying a second [4Fe-4S](2+) cluster] + N(6)-octanoyl-L-lysyl-[protein] + 2 oxidized [2Fe-2S]-[ferredoxin] + 2 S-adenosyl-L-methionine + 4 H(+) = [[Fe-S] cluster scaffold protein] + N(6)-[(R)-dihydrolipoyl]-L-lysyl-[protein] + 4 Fe(3+) + 2 hydrogen sulfide + 2 5'-deoxyadenosine + 2 L-methionine + 2 reduced [2Fe-2S]-[ferredoxin]. It participates in protein modification; protein lipoylation via endogenous pathway; protein N(6)-(lipoyl)lysine from octanoyl-[acyl-carrier-protein]: step 2/2. Catalyzes the radical-mediated insertion of two sulfur atoms into the C-6 and C-8 positions of the octanoyl moiety bound to the lipoyl domains of lipoate-dependent enzymes, thereby converting the octanoylated domains into lipoylated derivatives. This chain is Lipoyl synthase, found in Micrococcus luteus (strain ATCC 4698 / DSM 20030 / JCM 1464 / CCM 169 / CCUG 5858 / IAM 1056 / NBRC 3333 / NCIMB 9278 / NCTC 2665 / VKM Ac-2230) (Micrococcus lysodeikticus).